The following is a 196-amino-acid chain: Pyridoxal 5'-phosphate synthase subunit PdxT (196 aa).

Gly47–Ser49 provides a ligand contact to L-glutamine. Cys79 functions as the Nucleophile in the catalytic mechanism. L-glutamine-binding positions include Arg106 and Ile134–Arg135. Residues His170 and Glu172 each act as charge relay system in the active site.

The protein belongs to the glutaminase PdxT/SNO family. As to quaternary structure, in the presence of PdxS, forms a dodecamer of heterodimers. Only shows activity in the heterodimer.

It carries out the reaction aldehydo-D-ribose 5-phosphate + D-glyceraldehyde 3-phosphate + L-glutamine = pyridoxal 5'-phosphate + L-glutamate + phosphate + 3 H2O + H(+). The enzyme catalyses L-glutamine + H2O = L-glutamate + NH4(+). The protein operates within cofactor biosynthesis; pyridoxal 5'-phosphate biosynthesis. Catalyzes the hydrolysis of glutamine to glutamate and ammonia as part of the biosynthesis of pyridoxal 5'-phosphate. The resulting ammonia molecule is channeled to the active site of PdxS. The polypeptide is Pyridoxal 5'-phosphate synthase subunit PdxT (Bacillus pumilus (strain SAFR-032)).